Here is a 327-residue protein sequence, read N- to C-terminus: GMP reductase (327 aa).

Residue Cys176 is the Thioimidate intermediate of the active site. Ile205–Val228 contacts NADP(+).

Belongs to the IMPDH/GMPR family. GuaC type 2 subfamily.

The catalysed reaction is IMP + NH4(+) + NADP(+) = GMP + NADPH + 2 H(+). Functionally, catalyzes the irreversible NADPH-dependent deamination of GMP to IMP. It functions in the conversion of nucleobase, nucleoside and nucleotide derivatives of G to A nucleotides, and in maintaining the intracellular balance of A and G nucleotides. In Streptococcus equi subsp. zooepidemicus (strain H70), this protein is GMP reductase.